Consider the following 342-residue polypeptide: Dihydroorotate dehydrogenase (quinone) (342 aa).

FMN-binding positions include 65 to 69 (AGLDK) and threonine 89. Lysine 69 is a substrate binding site. Residue 114–118 (NRMGF) coordinates substrate. 2 residues coordinate FMN: asparagine 142 and asparagine 175. Asparagine 175 provides a ligand contact to substrate. Serine 178 acts as the Nucleophile in catalysis. Asparagine 180 serves as a coordination point for substrate. Residues lysine 220 and threonine 248 each coordinate FMN. Substrate is bound at residue 249 to 250 (NT). FMN is bound by residues glycine 271, glycine 300, and 321–322 (YT).

It belongs to the dihydroorotate dehydrogenase family. Type 2 subfamily. As to quaternary structure, monomer. FMN is required as a cofactor.

It localises to the cell membrane. It carries out the reaction (S)-dihydroorotate + a quinone = orotate + a quinol. It functions in the pathway pyrimidine metabolism; UMP biosynthesis via de novo pathway; orotate from (S)-dihydroorotate (quinone route): step 1/1. Its function is as follows. Catalyzes the conversion of dihydroorotate to orotate with quinone as electron acceptor. This Burkholderia pseudomallei (strain 668) protein is Dihydroorotate dehydrogenase (quinone).